A 160-amino-acid chain; its full sequence is Endoplasmic reticulum transmembrane protein 2 (160 aa).

Topologically, residues 1–2 (MG) are lumenal. A helical membrane pass occupies residues 3–23 (VYLAVLFSLLVIEMAILFILV). The Cytoplasmic portion of the chain corresponds to 24–45 (LPLPQRMRRWLYIRYSIISTNK). A helical membrane pass occupies residues 46–66 (KFRTYMVGIMIFVGLLFIDSW). The Lumenal segment spans residues 67 to 103 (KRSQIRVSTYRNQKNPYIINSVTPVDALASRAYNQRN). Residues 104–124 (VYISGFIIYFYICILTVMSIL) traverse the membrane as a helical segment. Residues 125-160 (RRIVEWNDKMKAGDDILKEKLRRKQKYLEELQKKKF) are Cytoplasmic-facing. Residues 157 to 160 (KKKF) carry the Di-lysine motif motif.

It belongs to the BCAP29/BCAP31 family.

It is found in the endoplasmic reticulum membrane. Functionally, may play a role in anterograde transport of membrane proteins from the endoplasmic reticulum to the Golgi. This chain is Endoplasmic reticulum transmembrane protein 2 (YET2), found in Saccharomyces cerevisiae (strain ATCC 204508 / S288c) (Baker's yeast).